Here is a 564-residue protein sequence, read N- to C-terminus: Proline--tRNA ligase (564 aa).

This sequence belongs to the class-II aminoacyl-tRNA synthetase family. ProS type 1 subfamily. Homodimer.

Its subcellular location is the cytoplasm. It carries out the reaction tRNA(Pro) + L-proline + ATP = L-prolyl-tRNA(Pro) + AMP + diphosphate. In terms of biological role, catalyzes the attachment of proline to tRNA(Pro) in a two-step reaction: proline is first activated by ATP to form Pro-AMP and then transferred to the acceptor end of tRNA(Pro). As ProRS can inadvertently accommodate and process non-cognate amino acids such as alanine and cysteine, to avoid such errors it has two additional distinct editing activities against alanine. One activity is designated as 'pretransfer' editing and involves the tRNA(Pro)-independent hydrolysis of activated Ala-AMP. The other activity is designated 'posttransfer' editing and involves deacylation of mischarged Ala-tRNA(Pro). The misacylated Cys-tRNA(Pro) is not edited by ProRS. The chain is Proline--tRNA ligase from Xylella fastidiosa (strain 9a5c).